The chain runs to 99 residues: NADH-quinone oxidoreductase subunit K (99 aa).

3 helical membrane-spanning segments follow: residues 2–22 (PVEY…LGVL), 28–48 (LILM…FLAF), and 60–80 (IAFF…AVVI).

It belongs to the complex I subunit 4L family. In terms of assembly, NDH-1 is composed of 14 different subunits. Subunits NuoA, H, J, K, L, M, N constitute the membrane sector of the complex.

Its subcellular location is the cell inner membrane. It carries out the reaction a quinone + NADH + 5 H(+)(in) = a quinol + NAD(+) + 4 H(+)(out). NDH-1 shuttles electrons from NADH, via FMN and iron-sulfur (Fe-S) centers, to quinones in the respiratory chain. The immediate electron acceptor for the enzyme in this species is believed to be ubiquinone. Couples the redox reaction to proton translocation (for every two electrons transferred, four hydrogen ions are translocated across the cytoplasmic membrane), and thus conserves the redox energy in a proton gradient. This Anaeromyxobacter dehalogenans (strain 2CP-1 / ATCC BAA-258) protein is NADH-quinone oxidoreductase subunit K.